A 350-amino-acid chain; its full sequence is 3-dehydroquinate synthase (350 aa).

NAD(+) contacts are provided by residues 106-110, 130-131, K143, and K152; these read GVIGD and TS. The Zn(2+) site is built by E185, H246, and H263.

It belongs to the sugar phosphate cyclases superfamily. Dehydroquinate synthase family. The cofactor is Co(2+). Zn(2+) is required as a cofactor. Requires NAD(+) as cofactor.

It is found in the cytoplasm. It carries out the reaction 7-phospho-2-dehydro-3-deoxy-D-arabino-heptonate = 3-dehydroquinate + phosphate. It participates in metabolic intermediate biosynthesis; chorismate biosynthesis; chorismate from D-erythrose 4-phosphate and phosphoenolpyruvate: step 2/7. Functionally, catalyzes the conversion of 3-deoxy-D-arabino-heptulosonate 7-phosphate (DAHP) to dehydroquinate (DHQ). The polypeptide is 3-dehydroquinate synthase (Clostridium beijerinckii (strain ATCC 51743 / NCIMB 8052) (Clostridium acetobutylicum)).